Consider the following 217-residue polypeptide: Protein-L-isoaspartate O-methyltransferase (217 aa).

Ser61 is an active-site residue.

Belongs to the methyltransferase superfamily. L-isoaspartyl/D-aspartyl protein methyltransferase family.

The protein resides in the cytoplasm. The enzyme catalyses [protein]-L-isoaspartate + S-adenosyl-L-methionine = [protein]-L-isoaspartate alpha-methyl ester + S-adenosyl-L-homocysteine. Functionally, catalyzes the methyl esterification of L-isoaspartyl residues in peptides and proteins that result from spontaneous decomposition of normal L-aspartyl and L-asparaginyl residues. It plays a role in the repair and/or degradation of damaged proteins. The protein is Protein-L-isoaspartate O-methyltransferase of Brucella anthropi (strain ATCC 49188 / DSM 6882 / CCUG 24695 / JCM 21032 / LMG 3331 / NBRC 15819 / NCTC 12168 / Alc 37) (Ochrobactrum anthropi).